The sequence spans 214 residues: A-type ATP synthase subunit D (214 aa).

This sequence belongs to the V-ATPase D subunit family. Has multiple subunits with at least A(3), B(3), C, D, E, F, H, I and proteolipid K(x).

It localises to the cell membrane. Functionally, component of the A-type ATP synthase that produces ATP from ADP in the presence of a proton gradient across the membrane. This chain is A-type ATP synthase subunit D, found in Methanosphaera stadtmanae (strain ATCC 43021 / DSM 3091 / JCM 11832 / MCB-3).